The chain runs to 476 residues: Mitochondrial-processing peptidase subunit beta (476 aa).

The N-terminal 28 residues, 1–28 (MASRRLALNLAQGVKARAGGVINPFRRG), are a transit peptide targeting the mitochondrion. His84 lines the Zn(2+) pocket. Glu87 serves as the catalytic Proton acceptor. Positions 88 and 164 each coordinate Zn(2+).

The protein belongs to the peptidase M16 family. As to quaternary structure, heterodimer of mpp (alpha) and pep (beta) subunits, forming the mitochondrial processing protease (MPP) in which mpp is involved in substrate recognition and binding and pep is the catalytic subunit. Component of the ubiquinol-cytochrome c oxidoreductase (cytochrome b-c1 complex, complex III, CIII), a multisubunit enzyme composed of 10 subunits. The complex is composed of 3 respiratory subunits cytochrome b (cob), cytochrome c1 (cyt-1) and Rieske protein (fes-1), 2 core protein subunits pep and ucr-1, and 5 low-molecular weight protein subunits qcr6, qcr7, qcr8, qcr9 and probably NCU16844/qcr10. The complex exists as an obligatory dimer and forms supercomplexes (SCs) in the inner mitochondrial membrane with NADH-ubiquinone oxidoreductase (complex I, CI) and cytochrome c oxidase (complex IV, CIV), resulting in different assemblies (supercomplexes SCI(1)III(2), SCIII(2)IV(1) and SCIII(2)IV(2) as well as higher order I(x)III(y)IV(z) megacomplexes). Zn(2+) serves as cofactor.

It localises to the mitochondrion matrix. Its subcellular location is the mitochondrion inner membrane. It catalyses the reaction Release of N-terminal transit peptides from precursor proteins imported into the mitochondrion, typically with Arg in position P2.. Binding to mpp is required for catalytic activity. Inhibited by metal chelator ethylenediaminetetraacetic acid (EDTA). In terms of biological role, catalytic subunit of the essential mitochondrial processing protease (MPP), which cleaves the mitochondrial sequence off newly imported precursors proteins. Preferentially, cleaves after an arginine at position P2. Component of the ubiquinol-cytochrome c oxidoreductase, a multisubunit transmembrane complex that is part of the mitochondrial electron transport chain which drives oxidative phosphorylation. The respiratory chain contains 3 multisubunit complexes succinate dehydrogenase (complex II, CII), ubiquinol-cytochrome c oxidoreductase (cytochrome b-c1 complex, complex III, CIII) and cytochrome c oxidase (complex IV, CIV), that cooperate to transfer electrons derived from NADH and succinate to molecular oxygen, creating an electrochemical gradient over the inner membrane that drives transmembrane transport and the ATP synthase. The cytochrome b-c1 complex catalyzes electron transfer from ubiquinol to cytochrome c, linking this redox reaction to translocation of protons across the mitochondrial inner membrane, with protons being carried across the membrane as hydrogens on the quinol. In the process called Q cycle, 2 protons are consumed from the matrix, 4 protons are released into the intermembrane space and 2 electrons are passed to cytochrome c. In Neurospora crassa (strain ATCC 24698 / 74-OR23-1A / CBS 708.71 / DSM 1257 / FGSC 987), this protein is Mitochondrial-processing peptidase subunit beta.